The sequence spans 218 residues: DNA endonuclease I-CeuI (218 aa).

Gly-65 and Glu-66 together coordinate Mg(2+). The segment at Ile-71 to Lys-75 is interaction with DNA. Asp-86 provides a ligand contact to Mg(2+). 3 interaction with DNA regions span residues Asn-90–His-94, Arg-114–Lys-116, and Lys-191–Gly-199.

It belongs to the LAGLIDADG endonuclease family. As to quaternary structure, homodimer. Mg(2+) is required as a cofactor.

The protein resides in the plastid. Its subcellular location is the chloroplast. Functionally, endonuclease involved in intron homing. Recognizes a degenerate sequence of 17-19 bp to produce a staggered cut 5 bp downstream from the CeLSU.5 intron insertion site. This chain is DNA endonuclease I-CeuI, found in Chlamydomonas moewusii (Chlamydomonas eugametos).